Consider the following 277-residue polypeptide: Glutamate racemase (277 aa).

Substrate-binding positions include 13–14 (DS) and 45–46 (YG). C76 (proton donor/acceptor) is an active-site residue. 77 to 78 (NT) lines the substrate pocket. The active-site Proton donor/acceptor is C186. 187–188 (TH) is a substrate binding site.

This sequence belongs to the aspartate/glutamate racemases family.

The enzyme catalyses L-glutamate = D-glutamate. Its pathway is cell wall biogenesis; peptidoglycan biosynthesis. Functionally, provides the (R)-glutamate required for cell wall biosynthesis. The protein is Glutamate racemase of Ralstonia nicotianae (strain ATCC BAA-1114 / GMI1000) (Ralstonia solanacearum).